We begin with the raw amino-acid sequence, 96 residues long: Co-chaperonin GroES (96 aa).

This sequence belongs to the GroES chaperonin family. Heptamer of 7 subunits arranged in a ring. Interacts with the chaperonin GroEL.

It localises to the cytoplasm. Functionally, together with the chaperonin GroEL, plays an essential role in assisting protein folding. The GroEL-GroES system forms a nano-cage that allows encapsulation of the non-native substrate proteins and provides a physical environment optimized to promote and accelerate protein folding. GroES binds to the apical surface of the GroEL ring, thereby capping the opening of the GroEL channel. The protein is Co-chaperonin GroES of Methylibium petroleiphilum (strain ATCC BAA-1232 / LMG 22953 / PM1).